Consider the following 140-residue polypeptide: Small ribosomal subunit protein uS8c (140 aa).

It belongs to the universal ribosomal protein uS8 family. As to quaternary structure, part of the 30S ribosomal subunit.

The protein localises to the plastid. Its subcellular location is the chloroplast. Its function is as follows. One of the primary rRNA binding proteins, it binds directly to 16S rRNA central domain where it helps coordinate assembly of the platform of the 30S subunit. The chain is Small ribosomal subunit protein uS8c (rps8) from Euglena gracilis.